Here is a 375-residue protein sequence, read N- to C-terminus: Proton-coupled zinc antiporter SLC30A8 (375 aa).

Topologically, residues 1–68 are cytoplasmic; that stretch reads MKGPEKAYLV…QREQTSAKKK (68 aa). The Zn(2+) site is built by H46, C47, and H48. The HCH Motif; seals regulatory zinc-binding pocket motif lies at 46-48; sequence HCH. A helical membrane pass occupies residues 69 to 89; it reads LCIASLICFVFISAEIVGGYI. Topologically, residues 90-98 are lumenal, vesicle; the sequence is AGSLAVVTD. A helical transmembrane segment spans residues 99 to 119; that stretch reads AAHLLVDLSSFFISLGSLWLS. H101 and D105 together coordinate Zn(2+). Topologically, residues 120–135 are cytoplasmic; that stretch reads SKSSTMRLTFGWYRAE. A helical transmembrane segment spans residues 136-156; it reads ILGALMSIITIWLVTGVLVYL. Residues 157–170 are Lumenal, vesicle-facing; it reads AIERIIRPDYTIDG. Residues 171 to 191 traverse the membrane as a helical segment; the sequence is TVMLITSACALGANVVLALIL. Residues 192–223 are Cytoplasmic-facing; it reads HQSGHGHSHAGGKHEHMASEYKPQTNASIRAA. Residues 224-244 traverse the membrane as a helical segment; it reads FIHVIGDLFQSISVLISALII. H226 and D230 together coordinate Zn(2+). Over 245–251 the chain is Lumenal, vesicle; sequence YFKPEYK. Residues 252–272 traverse the membrane as a helical segment; that stretch reads IADPICTFIFSIFVLITTVTV. Residues 273 to 375 lie on the Cytoplasmic side of the membrane; the sequence is LRDLLNILME…ECMFCYEPTQ (103 aa). Zn(2+)-binding residues include H307, H324, H351, E358, C367, and C370.

Belongs to the cation diffusion facilitator (CDF) transporter (TC 2.A.4) family. SLC30A subfamily. As to quaternary structure, homodimer.

The protein resides in the cytoplasmic vesicle. It localises to the secretory vesicle membrane. The protein localises to the cell membrane. It carries out the reaction Zn(2+)(in) + 2 H(+)(out) = Zn(2+)(out) + 2 H(+)(in). In terms of biological role, proton-coupled zinc ion antiporter mediating the entry of zinc into the lumen of pancreatic beta cell secretory granules, thereby regulating insulin secretion. This Xenopus laevis (African clawed frog) protein is Proton-coupled zinc antiporter SLC30A8 (slc30a8).